Reading from the N-terminus, the 422-residue chain is Leucine-rich repeat protein 1 (422 aa).

6 LRR repeats span residues 184 to 207, 209 to 230, 233 to 258, 260 to 279, 280 to 301, and 304 to 327; these read LKNL…IGDL, HLQE…LCTS, QKSL…QFRE, TNLN…IGQL, TNLR…EFKM, and LEYL…KLQV.

As to quaternary structure, component of the probable ECS(LRR1) E3 ubiquitin-protein ligase complex which contains CUL2, RBX1, Elongin BC complex and LRR1. Interacts with CUL2, RBX1, ELOB and ELOC.

It localises to the nucleus. It participates in protein modification; protein ubiquitination. Its function is as follows. Substrate recognition subunit of an ECS (Elongin BC-CUL2/5-SOCS-box protein) E3 ubiquitin-protein ligase complex which mediates the ubiquitination and subsequent proteasomal degradation of target proteins. ECS(LRR1) ubiquitinates MCM7 and promotes CMG replisome disassembly by VCP and chromatin extraction during S-phase. May negatively regulate the 4-1BB-mediated signaling cascades which result in the activation of NK-kappaB and JNK1. The sequence is that of Leucine-rich repeat protein 1 from Mus musculus (Mouse).